Reading from the N-terminus, the 569-residue chain is Acyl-CoA-binding domain-containing protein 5 (569 aa).

The first 31 residues, 1-31 (MELFYELLLTAAASLLVAFLLARLLASAATA), serve as a signal peptide directing secretion. The ACB domain occupies 415–506 (IEKRFGVAAA…LSEAIPGWMG (92 aa)). 2 residues coordinate an acyl-CoA: lysine 474 and tyrosine 493. A glycan (N-linked (GlcNAc...) asparagine) is linked at asparagine 508. Polar residues-rich tracts occupy residues 533 to 544 (INQHDSQGNEDN) and 552 to 569 (LTSSPNPEKGQSSDIPAE). The tract at residues 533–569 (INQHDSQGNEDNTGMYEGHLTSSPNPEKGQSSDIPAE) is disordered.

Belongs to the ACBP family. As to expression, highly expressed in seeds and leaves. Expressed at low levels in roots.

It is found in the endoplasmic reticulum. Functionally, binds medium- and long-chain acyl-CoA esters with high affinity. Can interact in vitro with palmitoyl-CoA and linolenoyl-CoA. Binds phosphatidic acid (PA) and phosphatidylcholine (PC) in vitro. May play a role in the biosynthesis of phospholipids. This is Acyl-CoA-binding domain-containing protein 5 from Oryza sativa subsp. japonica (Rice).